The following is a 136-amino-acid chain: Large ribosomal subunit protein bL17 (136 aa).

This sequence belongs to the bacterial ribosomal protein bL17 family. As to quaternary structure, part of the 50S ribosomal subunit. Contacts protein L32.

This is Large ribosomal subunit protein bL17 from Rickettsia prowazekii (strain Madrid E).